The following is a 275-amino-acid chain: Lacto-N-neotetraose biosynthesis glycosyltransferase LgtB (275 aa).

Belongs to the glycosyltransferase 25 family.

The protein operates within glycan metabolism; lacto-N-neotetraose biosynthesis. It functions in the pathway bacterial outer membrane biogenesis; lipooligosaccharide biosynthesis. In terms of biological role, adds the second galactose to the lacto-N-tetraose chain in lipooligosaccharide (LOS). The polypeptide is Lacto-N-neotetraose biosynthesis glycosyltransferase LgtB (lgtB) (Neisseria meningitidis serogroup B (strain ATCC BAA-335 / MC58)).